A 399-amino-acid chain; its full sequence is Argininosuccinate synthase (399 aa).

Residue 8–16 participates in ATP binding; it reads AYSGGLDTS. Residues tyrosine 87 and serine 92 each contribute to the L-citrulline site. Glycine 117 lines the ATP pocket. Residues threonine 119, asparagine 123, and aspartate 124 each contribute to the L-aspartate site. An L-citrulline-binding site is contributed by asparagine 123. Positions 127, 176, 185, 261, and 273 each coordinate L-citrulline.

Belongs to the argininosuccinate synthase family. Type 1 subfamily. In terms of assembly, homotetramer.

It localises to the cytoplasm. It catalyses the reaction L-citrulline + L-aspartate + ATP = 2-(N(omega)-L-arginino)succinate + AMP + diphosphate + H(+). Its pathway is amino-acid biosynthesis; L-arginine biosynthesis; L-arginine from L-ornithine and carbamoyl phosphate: step 2/3. In Clostridioides difficile (strain 630) (Peptoclostridium difficile), this protein is Argininosuccinate synthase.